The following is a 1461-amino-acid chain: Formin-3 (1461 aa).

Disordered stretches follow at residues 1–67 (MASK…SDDN) and 431–457 (YREE…RPTT). Low complexity predominate over residues 12–28 (TSRSIQSRNSSYSTSSN). Polar residues-rich tracts occupy residues 29-53 (ERIG…STND) and 438-457 (PHGN…RPTT). Positions 92–508 (SETEQLRKIY…KIQKSMQLLT (417 aa)) constitute a GBD/FH3 domain. An interaction with tea4 region spans residues 137–515 (QHTVLDEATY…LLTHTLEALE (379 aa)). Residues 540–639 (GTAEEIAEYK…VQNSNEQHLQ (100 aa)) adopt a coiled-coil conformation. The disordered stretch occupies residues 683 to 811 (GIPVRVHTPS…EPKIDETSLT (129 aa)). Over residues 700–718 (SFSGSEISSSPSPLLPDVS) the composition is skewed to low complexity. Residues 731–784 (SPPPPPPAVIVPTPAPAPIPVPPPAPIMGGPPPPPPPPGVAGAGPPPPPPPPPA) show a composition bias toward pro residues. Residues 801–811 (PEPKIDETSLT) show a composition bias toward basic and acidic residues. The FH2 domain maps to 845-1257 (LRDLHKPTRP…RIMSEDRDKL (413 aa)). 2 disordered regions span residues 1268-1337 (AKYR…AEEK) and 1416-1461 (ERLQ…RQKQ). 2 stretches are compositionally biased toward basic and acidic residues: residues 1273-1315 (KREL…KTGD) and 1325-1337 (MEDL…AEEK). Residues 1445 to 1454 (TNGSNASNLV) are compositionally biased toward polar residues.

Belongs to the formin homology family. As to quaternary structure, interacts with rax2, rho3 and tea4. Interacts with tea1 in the presence of tea4.

Its subcellular location is the cytoplasm. It localises to the cell cortex. It is found in the cell tip. Involved in controlling polarized cell growth. Required for interphase actin cable formation and microtubule organization. This chain is Formin-3 (for3), found in Schizosaccharomyces pombe (strain 972 / ATCC 24843) (Fission yeast).